The primary structure comprises 52 residues: uncharacterized protein (52 aa).

This is an uncharacterized protein from Halalkalibacterium halodurans (strain ATCC BAA-125 / DSM 18197 / FERM 7344 / JCM 9153 / C-125) (Bacillus halodurans).